A 177-amino-acid polypeptide reads, in one-letter code: MSRIGKRPVTIPSGVTANIADGVLTVKGPKGTLTLTLRDEISYTVDGDTILVKPANDTKGARAFWGMQRTLVDNLVTGVTQGYTKVLEITGVGYRANAQGKNLKLQLGYSHDVDFPVPEGIEIKTPDNTTVEISGIDKQKVGQVAAEIRRWRKPEPYKGKGIKYRGEFIFRKEGKKK.

The protein belongs to the universal ribosomal protein uL6 family. Part of the 50S ribosomal subunit.

Its function is as follows. This protein binds to the 23S rRNA, and is important in its secondary structure. It is located near the subunit interface in the base of the L7/L12 stalk, and near the tRNA binding site of the peptidyltransferase center. The chain is Large ribosomal subunit protein uL6 from Novosphingobium aromaticivorans (strain ATCC 700278 / DSM 12444 / CCUG 56034 / CIP 105152 / NBRC 16084 / F199).